A 560-amino-acid polypeptide reads, in one-letter code: Nuclear receptor subfamily 5 group A member 2 (560 aa).

The disordered stretch occupies residues 21–55 (IASAPGSETRHSPKREEQLREKRAGLPDRHRRPIP). The span at 28–48 (ETRHSPKREEQLREKRAGLPD) shows a compositional bias: basic and acidic residues. The segment at residues 104–175 (EELCPVCGDK…KCIDVGMKLE (72 aa)) is a DNA-binding region (nuclear receptor). The Zn(2+) site is built by Cys107, Cys110, Cys124, Cys127, Cys143, Cys149, Cys159, and Cys162. NR C4-type zinc fingers lie at residues 107-127 (CPVC…CESC) and 143-167 (CIEN…FKKC). The tract at residues 173-188 (KLEAVRADRMRGGRNK) is C-terminal extension (CTE). The FTZ-F1 box motif lies at 189–208 (FGPMYKRDRALKQQKKALIR). Lys289 is covalently cross-linked (Glycyl lysine isopeptide (Lys-Gly) (interchain with G-Cter in SUMO1)). The NR LBD domain maps to 319 to 558 (SIPHLILELL…NLLIEMLHAK (240 aa)). A phospholipid derivative is bound by residues Tyr535 and Lys539. The tract at residues 547 to 558 (YNNLLIEMLHAK) is AF-2.

It belongs to the nuclear hormone receptor family. NR5 subfamily. Monomer; Binds DNA as a monomer. Interacts with nuclear receptor corepressors NR0B1 and NR0B2; repressing NR5A2 nuclear receptor activity. Interacts with nuclear receptor coactivators CTNNB1, PPARGC1A and NCOA2; interaction takes place following ligand-binding and promotes target gene activation. Interacts (when sumoylated) with GPS2; interaction with GPS2 onto hepatic acute phase protein promoters prevents N-Cor corepressor complex dissociation. Interacts with HNF1A. Interacts with GRIP1. In terms of processing, sumoylated by SUMO1 at Lys-289 during the hepatic acute phase response, leading to promote interaction with GPS2 and prevent N-Cor corepressor complex dissociation.

It localises to the nucleus. It is found in the chromosome. In terms of biological role, orphan nuclear receptor that binds DNA as a monomer to the 5'-TCAAGGCCA-3' sequence and controls expression of target genes: regulates key biological processes, such as early embryonic development, cholesterol and bile acid synthesis pathways, as well as liver and pancreas morphogenesis. Ligand-binding causes conformational change which causes recruitment of coactivators, promoting target gene activation. The specific ligand is unknown, but specific phospholipids, such as phosphatidylethanolamine, phosphatidylserine, dilauroyl phosphatidylcholine and diundecanoyl phosphatidylcholine can act as ligand in vitro. Acts as a pioneer transcription factor, which unwraps target DNA from histones and elicits local opening of closed chromatin. Plays a central role during preimplantation stages of embryonic development. Plays a minor role in zygotic genome activation (ZGA) by regulating a small set of two-cell stage genes. Plays a major role in morula development (2-16 cells embryos) by acting as a master regulator at the 8-cell stage, controlling expression of lineage-specifying transcription factors and genes involved in mitosis, telomere maintenance and DNA repair. Zygotic NR5A2 binds to both closed and open chromatin with other transcription factors, often at SINE B1/Alu repeats DNA elements, promoting chromatin accessibility at nearby regulatory regions. Also involved in the epiblast stage of development and embryonic stem cell pluripotency, by promoting expression of POU5F1/OCT4. Regulates other processes later in development, such as formation of connective tissue in lower jaw and middle ear, neural stem cell differentiation, ovarian follicle development and Sertoli cell differentiation. Involved in exocrine pancreas development and acinar cell differentiation. Acts as an essential transcriptional regulator of lipid metabolism. Key regulator of cholesterol 7-alpha-hydroxylase gene (CYP7A) expression in liver. Activates the transcription of CYP2C38. Also acts as a negative regulator of inflammation in different organs, such as intestine, liver and pancreas. Protects against intestinal inflammation via its ability to regulate glucocorticoid production. Plays an anti-inflammatory role during the hepatic acute phase response by acting as a corepressor: inhibits the hepatic acute phase response by preventing dissociation of the N-Cor corepressor complex. Acts as a regulator of immunity by promoting lymphocyte T-cell development, proliferation and effector functions. Also involved in resolution of endoplasmic reticulum stress in the liver. In Mus musculus (Mouse), this protein is Nuclear receptor subfamily 5 group A member 2.